The primary structure comprises 415 residues: Histidine--tRNA ligase (415 aa).

It belongs to the class-II aminoacyl-tRNA synthetase family. As to quaternary structure, homodimer.

It is found in the cytoplasm. It catalyses the reaction tRNA(His) + L-histidine + ATP = L-histidyl-tRNA(His) + AMP + diphosphate + H(+). This Clostridium botulinum (strain Okra / Type B1) protein is Histidine--tRNA ligase.